The sequence spans 150 residues: MKQRFSQVATVIFFVMSIRSPRNLGFFFTLALFVVLVCSQEWFSFEMNRSCSMKVEHRMQFLSTIISEHQKSDVNCWDQIAKKMNVYLFEQKVSGSDVFFLDGADCERFFERNFLRYLPSRKSSHPDLPIAELLPYIRKADIACAGKQLI.

The N-terminal stretch at 1-39 is a signal peptide; the sequence is MKQRFSQVATVIFFVMSIRSPRNLGFFFTLALFVVLVCS.

This is an uncharacterized protein from Saccharomyces cerevisiae (strain ATCC 204508 / S288c) (Baker's yeast).